A 327-amino-acid chain; its full sequence is GPI-linked NAD(P)(+)--arginine ADP-ribosyltransferase 1 (327 aa).

Residues 1–22 (MQMPAMMSLLLVSVGLMEALQA) form the signal peptide. Cystine bridges form between cysteine 53-cysteine 277 and cysteine 174-cysteine 224. Asparagine 65 is a glycosylation site (N-linked (GlcNAc...) asparagine). Positions 73-273 (QVYADSWTLA…IYLRALGKHS (201 aa)) constitute a TR mART core domain. NAD(+) contacts are provided by tyrosine 121 and arginine 179. Residues arginine 179 and serine 202 contribute to the active site. Serine 233 provides a ligand contact to NAD(+). Glutamate 240 is an active-site residue. Asparagine 253 is a glycosylation site (N-linked (GlcNAc...) asparagine). A lipid anchor (GPI-anchor amidated serine) is attached at serine 295. Positions 296–327 (AMGQSPLSAVWSLLLLLWFLVVRAFPDGPGLL) are cleaved as a propeptide — removed in mature form.

It belongs to the Arg-specific ADP-ribosyltransferase family.

It is found in the sarcoplasmic reticulum membrane. It catalyses the reaction L-arginyl-[protein] + NAD(+) = N(omega)-(ADP-D-ribosyl)-L-arginyl-[protein] + nicotinamide + H(+). Its function is as follows. Has ADP-ribosyltransferase activity toward GLP1R. This is GPI-linked NAD(P)(+)--arginine ADP-ribosyltransferase 1 (ART1) from Homo sapiens (Human).